The chain runs to 390 residues: Putative transposase y4qE (390 aa).

It belongs to the transposase IS1111A/IS1328/IS1533 family.

The chain is Putative transposase y4qE from Sinorhizobium fredii (strain NBRC 101917 / NGR234).